A 149-amino-acid polypeptide reads, in one-letter code: Calmodulin-2 (149 aa).

Ala-2 is subject to N-acetylalanine. EF-hand domains are found at residues 8 to 43 (EQIA…LGQN), 44 to 79 (PTEA…KMKD), 81 to 116 (DSEE…LGEK), and 117 to 149 (LTDE…MTSK). Positions 21, 23, 25, 27, 32, 57, 59, 61, 63, 68, 94, 96, 98, and 105 each coordinate Ca(2+). Lys-116 is subject to N6,N6,N6-trimethyllysine. The Ca(2+) site is built by Asp-130, Asp-132, Asp-134, Gln-136, and Glu-141.

Belongs to the calmodulin family.

Calmodulin mediates the control of a large number of enzymes, ion channels and other proteins by Ca(2+). Among the enzymes to be stimulated by the calmodulin-Ca(2+) complex are a number of protein kinases and phosphatases. This chain is Calmodulin-2 (CAM2), found in Branchiostoma lanceolatum (Common lancelet).